Reading from the N-terminus, the 473-residue chain is Cysteine--tRNA ligase (473 aa).

Cys-28 lines the Zn(2+) pocket. A 'HIGH' region motif is present at residues 30-40; the sequence is PTVYNMPHIGN. The Zn(2+) site is built by Cys-213, His-238, and Glu-242. A 'KMSKS' region motif is present at residues 270–274; the sequence is KMSKS. An ATP-binding site is contributed by Lys-273.

The protein belongs to the class-I aminoacyl-tRNA synthetase family. It depends on Zn(2+) as a cofactor.

The protein localises to the cytoplasm. The enzyme catalyses tRNA(Cys) + L-cysteine + ATP = L-cysteinyl-tRNA(Cys) + AMP + diphosphate. The protein is Cysteine--tRNA ligase of Methanosarcina mazei (strain ATCC BAA-159 / DSM 3647 / Goe1 / Go1 / JCM 11833 / OCM 88) (Methanosarcina frisia).